We begin with the raw amino-acid sequence, 686 residues long: 3',5'-cyclic-AMP phosphodiesterase 4C (686 aa).

Phosphoserine is present on residues Ser9, Ser28, Ser40, and Ser83. Disordered regions lie at residues 88-116 (NGLPGGKGLLDAQSGPSLGRALQPPVHHV) and 124-143 (YRSDSDHEPSPKAVSRTSSA). Over residues 124–133 (YRSDSDHEPS) the composition is skewed to basic and acidic residues. The PDEase domain occupies 313 to 642 (VQTDQEEQLA…EWYQSRIPCS (330 aa)). Catalysis depends on His389, which acts as the Proton donor. His389 lines the 3',5'-cyclic AMP pocket. AMP is bound by residues His389 and His393. The Zn(2+) site is built by His393, His429, Asp430, and Asp547. AMP contacts are provided by Asp430, Asp547, Gln598, and Phe601. Asp430 contacts Mg(2+). Asp430 provides a ligand contact to Mn(2+). Positions 598 and 601 each coordinate 3',5'-cyclic AMP. A Phosphoserine modification is found at Ser642. Residues 660 to 671 (EAEEEEEEEDEG) show a composition bias toward acidic residues. The disordered stretch occupies residues 660 to 686 (EAEEEEEEEDEGQCTALNRESSELPST). Residues 674-686 (TALNRESSELPST) are compositionally biased toward polar residues.

The protein belongs to the cyclic nucleotide phosphodiesterase family. PDE4 subfamily. As to quaternary structure, part of a complex containing AKAP5, ADCY5, ADCY6 and PKD2. The cofactor is Zn(2+). Mg(2+) serves as cofactor. Requires Mn(2+) as cofactor.

The protein resides in the cell projection. Its subcellular location is the cilium. The catalysed reaction is 3',5'-cyclic AMP + H2O = AMP + H(+). Its pathway is purine metabolism; 3',5'-cyclic AMP degradation; AMP from 3',5'-cyclic AMP: step 1/1. In terms of biological role, hydrolyzes the second messenger cAMP, which is a key regulator of many important physiological processes. The protein is 3',5'-cyclic-AMP phosphodiesterase 4C of Mus musculus (Mouse).